Here is a 611-residue protein sequence, read N- to C-terminus: Phosphatidylinositol 3,4,5-trisphosphate 3-phosphatase and protein-tyrosine-phosphatase PTEN2A (611 aa).

2 disordered regions span residues 1–42 and 87–109; these read MSSE…GVAS and GIRLSPKSPQTNDTTTEGTSSAT. Position 91 is a phosphoserine (Ser91). Low complexity predominate over residues 100-109; sequence TTTEGTSSAT. One can recognise a Phosphatase tensin-type domain in the interval 145 to 324; it reads RRYQEGGFDL…KYFERILTYF (180 aa). The Phosphocysteine intermediate role is filled by Cys263. Positions 331-458 constitute a C2 tensin-type domain; the sequence is GRRCMLRGFR…FMVEVVLADI (128 aa). Positions 462-486 are enriched in polar residues; that stretch reads IPTNPSSETASKTPEETSAANSSPV. Positions 462-589 are disordered; the sequence is IPTNPSSETA…VNASSSSESE (128 aa). The segment covering 495 to 507 has biased composition (basic and acidic residues); that stretch reads PDKETENPDKDDV. Ser509 is subject to Phosphoserine. Composition is skewed to polar residues over residues 514–530 and 549–565; these read DSTGPTKTTSSASSQTP and VSISGNKGSSQPVQGVT.

It belongs to the PTEN phosphatase protein family. Expressed in seedlings, roots, stems, leaves, flowers and siliques. However, at protein level, not observed in older leaves and mature siliques.

The enzyme catalyses O-phospho-L-tyrosyl-[protein] + H2O = L-tyrosyl-[protein] + phosphate. The catalysed reaction is a 1,2-diacyl-sn-glycero-3-phospho-(1D-myo-inositol-3,4,5-trisphosphate) + H2O = a 1,2-diacyl-sn-glycero-3-phospho-(1D-myo-inositol-4,5-bisphosphate) + phosphate. Its function is as follows. Binds phosphatidic acid. Protein tyrosine phosphatase that also exhibits lipid phosphatase activity. Hydrolyzed poorly p-nitrophenyl phosphate (p-NPP). Can use PtdIns isomers as substrates. Removes efficiently phosphate from the D3 position of the inositol ring, less from the D4 position and not at all from the D5 position on monophosphorylated PtdIns isomers (PIPs). The presence of a phosphate group in the D5 position on PIP(2) isomers reduces lipid phosphatase activity. Mostly active on PtdIns(3)P and PtdIns(3,4)P(2), to a lower extent, on PtdIns(4)P and PtdIns(3,5)P(2), but barely against PtdIns(3,4,5)P(3) as substrate. The polypeptide is Phosphatidylinositol 3,4,5-trisphosphate 3-phosphatase and protein-tyrosine-phosphatase PTEN2A (Arabidopsis thaliana (Mouse-ear cress)).